Consider the following 236-residue polypeptide: uncharacterized protein (236 aa).

Belongs to the RHS family.

This is an uncharacterized protein from Escherichia coli (strain K12).